The chain runs to 410 residues: MRGIIKGVSNDGLGVLGEVLVPFAYPGDVVEVISTRERFGRTIARDFKLVKSSPIRVPGKCRYFGRCGGCLWQGLKYREQLKLKEEIFKRVTGVEAEIKGSPRIWFFRNISNFIVTVNGIGFKEFGMPRTVVSVDECPVFSERTKLYIRAMKRFLRETGLNPWNWKNGDVHYLQVREGKFTGEVMINVIAHIPPSGREELTEAFGFADSVYWSLKRDKRDDPKGIPTLIKGNEFIRESIEGLVYLIHPSTFFQTNSYALPILLKAVESFAEGSKVLDLYSGVGTFSLYLAKKGFEVTGVEVNEESVRVAKKSAEVNSLDVSFIPGRAEDAKLKGYETLIVDPPRKGLKDFSKRIAKEGPENLIYVSCNPSKFVLDYRNYLSKAYKIEDAVLIDMFPHTPHVEAVVKLRRR.

The [4Fe-4S] cluster site is built by Cys-61, Cys-67, Cys-70, and Cys-137. Positions 253, 279, 300, and 341 each coordinate S-adenosyl-L-methionine. The Nucleophile role is filled by Cys-367.

Belongs to the class I-like SAM-binding methyltransferase superfamily. RNA M5U methyltransferase family.

It catalyses the reaction uridine(747) in 23S rRNA + S-adenosyl-L-methionine = 5-methyluridine(747) in 23S rRNA + S-adenosyl-L-homocysteine + H(+). With respect to regulation, activated by magnesium ions. Catalyzes the formation of 5-methyl-uridine at position equivalent to 747 (m5U747) in 23S rRNA (m5U859 in the P.abyssi numbering). The protein is 23S rRNA (uracil(747)-C(5))-methyltransferase of Pyrococcus abyssi (strain GE5 / Orsay).